Here is a 519-residue protein sequence, read N- to C-terminus: Chaperone SurA (519 aa).

Positions methionine 1–alanine 31 are cleaved as a signal peptide. Low complexity-rich tracts occupy residues alanine 31–alanine 45 and proline 197–alanine 207. Disordered stretches follow at residues alanine 31 to serine 50 and asparagine 196 to serine 221. Residues proline 223–aspartate 324 form the PpiC 1 domain. The disordered stretch occupies residues glycine 328–proline 361. Residues valine 364–glutamate 463 form the PpiC 2 domain.

Its subcellular location is the periplasm. It carries out the reaction [protein]-peptidylproline (omega=180) = [protein]-peptidylproline (omega=0). Chaperone involved in the correct folding and assembly of outer membrane proteins. Recognizes specific patterns of aromatic residues and the orientation of their side chains, which are found more frequently in integral outer membrane proteins. May act in both early periplasmic and late outer membrane-associated steps of protein maturation. The polypeptide is Chaperone SurA (Bordetella parapertussis (strain 12822 / ATCC BAA-587 / NCTC 13253)).